Here is a 506-residue protein sequence, read N- to C-terminus: Deoxyguanosinetriphosphate triphosphohydrolase (506 aa).

Residues 66–274 (RLTHSLEVQQ…MEAADDISYC (209 aa)) enclose the HD domain.

Belongs to the dGTPase family. Type 1 subfamily. In terms of assembly, homotetramer. It depends on Mg(2+) as a cofactor.

It carries out the reaction dGTP + H2O = 2'-deoxyguanosine + triphosphate + H(+). In terms of biological role, dGTPase preferentially hydrolyzes dGTP over the other canonical NTPs. This is Deoxyguanosinetriphosphate triphosphohydrolase from Yersinia pseudotuberculosis serotype O:3 (strain YPIII).